The following is a 64-amino-acid chain: KILYLLFAFLFLAFLSEPGNAYKRCHIKGGHCFPKEKICIPPSSDFGKMDCPWRRKSLKKGSGK.

The first 21 residues, 1 to 21, serve as a signal peptide directing secretion; sequence KILYLLFAFLFLAFLSEPGNA. Cysteine 32 and cysteine 51 are oxidised to a cystine.

This sequence belongs to the crotamine-myotoxin family. Monomer. Expressed by the venom gland.

Its subcellular location is the secreted. Functionally, cationic peptide that possesses multiple functions. It acts as a cell-penetrating peptide (CPP), and as a potent voltage-gated potassium channel (Kv) inhibitor. It exhibits antimicrobial activities, hind limb paralysis, and severe muscle necrosis by a non-enzymatic mechanism. The protein is Myotoxin-2 of Crotalus durissus terrificus (South American rattlesnake).